The chain runs to 229 residues: Aldehyde oxidoreductase iron-sulfur-binding subunit PaoA (229 aa).

A disordered region spans residues 1-21; that stretch reads MSNQGEYPEDNRVGKHEPHDL. Positions 1 to 53 form a signal peptide, tat-type signal; the sequence is MSNQGEYPEDNRVGKHEPHDLSLTRRDLIKVSAATAAAAVVYPHSTLAASVPA. Residues 9-21 show a composition bias toward basic and acidic residues; the sequence is EDNRVGKHEPHDL. In terms of domain architecture, 2Fe-2S ferredoxin-type spans 61–137; that stretch reads MPLTLKVNGK…GAEITTIEGL (77 aa). C99, C104, G105, C107, C119, C158, C161, C208, and C210 together coordinate [2Fe-2S] cluster.

Heterotrimer composed of PaoA, PaoB and PaoC. Requires [2Fe-2S] cluster as cofactor. Exported by the Tat system. The position of the signal peptide cleavage has not been experimentally proven.

The protein localises to the periplasm. It catalyses the reaction an aldehyde + A + H2O = a carboxylate + AH2 + H(+). In terms of biological role, oxidizes aldehydes to the corresponding carboxylic acids with a preference for aromatic aldehydes. It might play a role in the detoxification of aldehydes to avoid cell damage. This is Aldehyde oxidoreductase iron-sulfur-binding subunit PaoA from Escherichia coli O157:H7.